The chain runs to 1451 residues: DNA polymerase III PolC-type (1451 aa).

One can recognise an Exonuclease domain in the interval 416 to 575; the sequence is FVIFDIETTG…YDTEALKKVF (160 aa).

It belongs to the DNA polymerase type-C family. PolC subfamily.

The protein localises to the cytoplasm. The enzyme catalyses DNA(n) + a 2'-deoxyribonucleoside 5'-triphosphate = DNA(n+1) + diphosphate. Functionally, required for replicative DNA synthesis. This DNA polymerase also exhibits 3' to 5' exonuclease activity. The sequence is that of DNA polymerase III PolC-type from Mycoplasma genitalium (strain ATCC 33530 / DSM 19775 / NCTC 10195 / G37) (Mycoplasmoides genitalium).